The chain runs to 163 residues: Small ribosomal subunit protein eS10A (163 aa).

A disordered region spans residues 92–163 (LTQTTRSNAV…GFGRASRYDN (72 aa)). Residues 105–116 (GGPGGPGGGFGG) show a composition bias toward gly residues.

The protein belongs to the eukaryotic ribosomal protein eS10 family.

Its subcellular location is the cytoplasm. This Drosophila melanogaster (Fruit fly) protein is Small ribosomal subunit protein eS10A (RpS10a).